We begin with the raw amino-acid sequence, 566 residues long: Arginine--tRNA ligase (566 aa).

The 'HIGH' region motif lies at 120–130 (PNIAKPFHVGH).

The protein belongs to the class-I aminoacyl-tRNA synthetase family. As to quaternary structure, monomer.

Its subcellular location is the cytoplasm. It carries out the reaction tRNA(Arg) + L-arginine + ATP = L-arginyl-tRNA(Arg) + AMP + diphosphate. This is Arginine--tRNA ligase from Clostridium kluyveri (strain NBRC 12016).